A 94-amino-acid polypeptide reads, in one-letter code: C-C motif chemokine 26 (94 aa).

The signal sequence occupies residues 1 to 23 (MMGLSLASAVLLASLLSLHLGTA). 2 disulfides stabilise this stretch: C33/C57 and C34/C73.

It belongs to the intercrine beta (chemokine CC) family. As to quaternary structure, monomer. As to expression, ubiquitously expressed at low levels in various tissues including heart and ovary.

The protein resides in the secreted. Chemoattractant for eosinophils and basophils. Acts as a ligand for C-C chemokine receptor CCR3 which triggers Ca(2+) mobilization in eosinophils. Also acts as a ligand for CX3C chemokine receptor CX3CR1, inducing cell chemotaxis. The protein is C-C motif chemokine 26 of Homo sapiens (Human).